The primary structure comprises 301 residues: uncharacterized protein (301 aa).

Active-site charge relay system residues include S44 and Y107. Y133 functions as the Proton donor in the catalytic mechanism. Catalysis depends on K162, which acts as the Schiff-base intermediate with substrate.

The protein belongs to the DapA family. Homotetramer.

Its subcellular location is the cytoplasm. This is an uncharacterized protein from Pyrobaculum neutrophilum (strain DSM 2338 / JCM 9278 / NBRC 100436 / V24Sta) (Thermoproteus neutrophilus).